We begin with the raw amino-acid sequence, 995 residues long: Bifunctional glutamine synthetase adenylyltransferase/adenylyl-removing enzyme (995 aa).

An adenylyl removase region spans residues 1 to 474 (MNHSAPGNAD…HYEKLFEGDD (474 aa)). GlnE stretches follow at residues 122-333 (RRMK…MKRQ) and 637-853 (SYEE…MRRA). Positions 479 to 995 (AKLPALDYSA…LEGTSPASAR (517 aa)) are adenylyl transferase.

This sequence belongs to the GlnE family. Mg(2+) is required as a cofactor.

The catalysed reaction is [glutamine synthetase]-O(4)-(5'-adenylyl)-L-tyrosine + phosphate = [glutamine synthetase]-L-tyrosine + ADP. It carries out the reaction [glutamine synthetase]-L-tyrosine + ATP = [glutamine synthetase]-O(4)-(5'-adenylyl)-L-tyrosine + diphosphate. Involved in the regulation of glutamine synthetase GlnA, a key enzyme in the process to assimilate ammonia. When cellular nitrogen levels are high, the C-terminal adenylyl transferase (AT) inactivates GlnA by covalent transfer of an adenylyl group from ATP to specific tyrosine residue of GlnA, thus reducing its activity. Conversely, when nitrogen levels are low, the N-terminal adenylyl removase (AR) activates GlnA by removing the adenylyl group by phosphorolysis, increasing its activity. The regulatory region of GlnE binds the signal transduction protein PII (GlnB) which indicates the nitrogen status of the cell. This Bradyrhizobium diazoefficiens (strain JCM 10833 / BCRC 13528 / IAM 13628 / NBRC 14792 / USDA 110) protein is Bifunctional glutamine synthetase adenylyltransferase/adenylyl-removing enzyme.